The sequence spans 267 residues: Ribosyldihydronicotinamide dehydrogenase-like protein traD (267 aa).

FAD contacts are provided by residues H9, 15–16, and 100–103; these read LN and LWWF. 122–124 is a binding site for substrate; that stretch reads GHG. Residues 152 to 155 and Y160 each bind FAD; that span reads TLGG.

It belongs to the NAD(P)H dehydrogenase (quinone) family. Homodimer. The cofactor is FAD.

Its pathway is secondary metabolite biosynthesis. Functionally, ribosyldihydronicotinamide dehydrogenase-like protein; part of the tra gene cluster that produces terrestric acid. The clavatol biosynthesis cluster cla and the terrestric acid cluster tra are both involved in the production of peniphenones and penilactones. The non-reducing PKS claF is responsible for the formation of clavatol from successive condensations of 3 malonyl-CoA units, presumably with a simple acetyl-CoA starter unit, and 2 methylation steps. The esterase claE probably collaborates with claF by catalyzing the hydrolysis of ACP-bound acyl intermediates to free the ACP from stalled intermediates. The clavatol oxidase claD then converts clavatol to hydroxyclavatol. Spontaneous dehydration of hydroxyclavatol leads to the accumulation of the highly active ortho-quinone methide. On the other hand, the PKS-NRPS hybrid traA is involved in the formation of crustosic acid, with the help of traB and traD. The polyketide synthase module (PKS) of traA is responsible for the synthesis of the polyketide backbone via the condensation of an acetyl-CoA starter unit with 3 malonyl-CoA units. The downstream nonribosomal peptide synthetase (NRPS) module then amidates the carboxyl end of the polyketide with L-malic acid. Because traA lacks a designated enoylreductase (ER) domain, the required activity is provided the enoyl reductase traG. Crustosic acid undergoes decarboxylation and isomerization to the terrestric acid, catalyzed by the 2-oxoglutarate-dependent dioxygenase traH. Both acids are further converted to the 2 gamma-butyrolactones (R)-5-methyltetronic acid and (S)-5-carboxylmethyltetronic acid, with involvement of the cytochrome P450 monooxygenase claJ. Spontaneous addition of the methide to these gamma-butyrolactones leads to peniphenone D and penilactone D, which undergo again stereospecific attacking by methide to give penilactones A and B. The sequence is that of Ribosyldihydronicotinamide dehydrogenase-like protein traD from Penicillium crustosum (Blue mold fungus).